We begin with the raw amino-acid sequence, 379 residues long: Leukocyte elastase inhibitor (379 aa).

Met1 is modified (N-acetylmethionine). An N6-acetyllysine mark is found at Lys137 and Lys177. The tract at residues 351-379 is CARD-binding motif (CBM); the sequence is NFNADHPFIFFIRHNPSANILFLGRFSSP.

The protein belongs to the serpin family. Ov-serpin subfamily. In terms of assembly, monomer. Interacts (via C-terminus) with CASP1; CASP4 (via CARD domain) and CASP5; these interactions regulate the activity of inflammatory caspases. Interacts with PRTN3. Interacts with GZMH. Interacts with TMSB4. Post-translationally, the N-terminus is blocked.

It localises to the secreted. The protein resides in the cytoplasm. Its subcellular location is the cytolytic granule. The protein localises to the early endosome. Its function is as follows. Neutrophil serine protease inhibitor that plays an essential role in the regulation of the innate immune response, inflammation and cellular homeostasis. Acts primarily to protect the cell from proteases released in the cytoplasm during stress or infection. These proteases are important in killing microbes but when released from granules, these potent enzymes also destroy host proteins and contribute to mortality. Regulates the activity of the neutrophil proteases elastase, cathepsin G, proteinase-3, chymase, chymotrypsin, and kallikrein-3. Also acts as a potent intracellular inhibitor of GZMH by directly blocking its proteolytic activity. During inflammation, limits the activity of inflammatory caspases CASP1, CASP4 and CASP5 by suppressing their caspase-recruitment domain (CARD) oligomerization and enzymatic activation. When secreted, promotes the proliferation of beta-cells via its protease inhibitory function. The protein is Leukocyte elastase inhibitor (SERPINB1) of Equus caballus (Horse).